We begin with the raw amino-acid sequence, 91 residues long: Large ribosomal subunit protein bL27 (91 aa).

The segment at 1–21 (MAHKKSGGSSRNGRDSAGRRL) is disordered.

It belongs to the bacterial ribosomal protein bL27 family.

The sequence is that of Large ribosomal subunit protein bL27 from Phenylobacterium zucineum (strain HLK1).